We begin with the raw amino-acid sequence, 95 residues long: UPF0381 protein HI_0400 (95 aa).

It belongs to the UPF0381 family.

This Haemophilus influenzae (strain ATCC 51907 / DSM 11121 / KW20 / Rd) protein is UPF0381 protein HI_0400.